Here is a 302-residue protein sequence, read N- to C-terminus: Nucleotide-binding protein Strop_3101 (302 aa).

Residue 26 to 33 (GVSGGGRS) coordinates ATP. GTP is bound at residue 77–80 (DVRS).

The protein belongs to the RapZ-like family.

Its function is as follows. Displays ATPase and GTPase activities. This is Nucleotide-binding protein Strop_3101 from Salinispora tropica (strain ATCC BAA-916 / DSM 44818 / JCM 13857 / NBRC 105044 / CNB-440).